A 1053-amino-acid chain; its full sequence is Mgp-operon protein 3 (1053 aa).

The first 25 residues, 1–25, serve as a signal peptide directing secretion; that stretch reads MKTMRKQIYKKAYWLLLPFLPLALA. Disordered stretches follow at residues 162 to 207 and 224 to 261; these read SLAK…GFKL and EPIDGTKQGKGKDSSGWSSTEENEAKNDAPSVSGGGSS. Basic and acidic residues predominate over residues 164-175; the sequence is AKEKGKTQREVH. Polar residues predominate over residues 179–207; the sequence is GQANQWTSQRNQHDLNNNPSPNASTGFKL. Residues 946-966 form a helical membrane-spanning segment; it reads VGSSVGILFILLVLGLGIGIP. The tract at residues 1024–1053 is disordered; the sequence is AAFLKPPVQPPSKPEGEQKAVEVKSEETKS. Positions 1037–1053 are enriched in basic and acidic residues; it reads PEGEQKAVEVKSEETKS.

The protein resides in the cell membrane. This chain is Mgp-operon protein 3, found in Mycoplasma genitalium (strain ATCC 33530 / DSM 19775 / NCTC 10195 / G37) (Mycoplasmoides genitalium).